Consider the following 145-residue polypeptide: Large ribosomal subunit protein uL14m (145 aa).

The transit peptide at Met-1–Gly-30 directs the protein to the mitochondrion.

Belongs to the universal ribosomal protein uL14 family. In terms of assembly, component of the mitochondrial ribosome large subunit (39S) which comprises a 16S rRNA and about 50 distinct proteins. Interacts with MALSU1.

The protein localises to the mitochondrion. Functionally, may form part of 2 intersubunit bridges in the assembled ribosome. Upon binding to MALSU1, intersubunit bridge formation is blocked, preventing ribosome formation and repressing translation. The chain is Large ribosomal subunit protein uL14m (MRPL14) from Bos taurus (Bovine).